We begin with the raw amino-acid sequence, 2293 residues long: Protein Ycf2 B (2293 aa).

Residue 1647-1654 (GSIGTGRS) coordinates ATP.

The protein belongs to the Ycf2 family.

The protein resides in the plastid. It is found in the chloroplast stroma. Functionally, probable ATPase of unknown function. Its presence in a non-photosynthetic plant (Epifagus virginiana) and experiments in tobacco indicate that it has an essential function which is probably not related to photosynthesis. The polypeptide is Protein Ycf2 B (Crucihimalaya wallichii (Rock-cress)).